Here is a 301-residue protein sequence, read N- to C-terminus: GTP cyclohydrolase FolE2 (301 aa).

Belongs to the GTP cyclohydrolase IV family.

It carries out the reaction GTP + H2O = 7,8-dihydroneopterin 3'-triphosphate + formate + H(+). It functions in the pathway cofactor biosynthesis; 7,8-dihydroneopterin triphosphate biosynthesis; 7,8-dihydroneopterin triphosphate from GTP: step 1/1. Converts GTP to 7,8-dihydroneopterin triphosphate. This Pseudomonas putida (strain GB-1) protein is GTP cyclohydrolase FolE2.